Here is a 206-residue protein sequence, read N- to C-terminus: Acireductone dioxygenase (206 aa).

Fe(2+) contacts are provided by H102, H104, E108, and H146. Ni(2+)-binding residues include H102, H104, E108, and H146.

It belongs to the acireductone dioxygenase (ARD) family. In terms of assembly, monomer. Fe(2+) is required as a cofactor. Requires Ni(2+) as cofactor.

It carries out the reaction 1,2-dihydroxy-5-(methylsulfanyl)pent-1-en-3-one + O2 = 3-(methylsulfanyl)propanoate + CO + formate + 2 H(+). It catalyses the reaction 1,2-dihydroxy-5-(methylsulfanyl)pent-1-en-3-one + O2 = 4-methylsulfanyl-2-oxobutanoate + formate + 2 H(+). Its pathway is amino-acid biosynthesis; L-methionine biosynthesis via salvage pathway; L-methionine from S-methyl-5-thio-alpha-D-ribose 1-phosphate: step 5/6. Functionally, catalyzes 2 different reactions between oxygen and the acireductone 1,2-dihydroxy-3-keto-5-methylthiopentene (DHK-MTPene) depending upon the metal bound in the active site. Fe-containing acireductone dioxygenase (Fe-ARD) produces formate and 2-keto-4-methylthiobutyrate (KMTB), the alpha-ketoacid precursor of methionine in the methionine recycle pathway. Ni-containing acireductone dioxygenase (Ni-ARD) produces methylthiopropionate, carbon monoxide and formate, and does not lie on the methionine recycle pathway. In Frankia alni (strain DSM 45986 / CECT 9034 / ACN14a), this protein is Acireductone dioxygenase.